Consider the following 100-residue polypeptide: uncharacterized protein (100 aa).

A signal peptide spans 1–26; the sequence is MKRLLVSLRVWMVFLMNWVTPDRKTA.

This is an uncharacterized protein from Bacillus subtilis (strain 168).